The chain runs to 34 residues: Mu-theraphotoxin-Pspp1 (34 aa).

3 disulfide bridges follow: C2–C17, C9–C22, and C16–C29. Position 34 is a phenylalanine amide (F34).

This sequence belongs to the neurotoxin 10 (Hwtx-1) family. As to expression, expressed by the venom gland.

Its subcellular location is the secreted. Voltage-gated sodium channel inhibitor. It is unclear if it selectively inhibits Nav1.7/SCN9A or shows similar potency on all sodium channels tested. According to Escoubas et al., 2006 and Nicolas et al., 2019, it is selective over Nav1.7/SCN9A (90% inhibition at 1 uM), versus Nav1.4 and Nav1.6 (35% inhibition), and shows a small inhibition on all other sodium channels (except Nav1.8/SCN10A). According to Goncalves et al., 2019, it shows a similar inhibition on almost all sodium channels tested (Nav1.1/SCN1A (IC(50)=280.3 nM), Nav1.2/SCN2A (IC(50)=73.7 nM), Nav1.3/SCN3A (IC(50)=201.5 nM), Nav1.4/SCN4A (IC(50)&gt;2100 nM), Nav1.5/SCN5A (IC(50)=710.6 nM), Nav1.6/SCN8A (IC(50)=491.2 nM), and Nav1.7/SCN9A (IC(50)=254.3-260 nM)), except Nav1.8/SCN10A. The voltage-dependence of steady-state Nav1.7/SCN9A channel activation and inactivation are not affected, suggesting that is does not act as a gating-modifier toxin but rather blocks or impedes ion flux through the channel pore. The toxin effect is partial and poorly reversible. In addition to its inhibition to sodium channels, it also shows a small inhibition on rat Kv3.4/KCNC4 potassium channels (20% inhibition at 1 uM). In vivo, when tested on pain models, it shows analgesic activity. This is Mu-theraphotoxin-Pspp1 from Phlogiellus sp. (Tarantula).